Reading from the N-terminus, the 839-residue chain is MLETLRGNKLHSGTSKGANKKLNELLESSDNLPSASSELGSIQVSINELRRRVFQLRSKNKASKDYTKAHYLLANSGLSFEDVDAFIKDLQTNQFLEPNPPKIIESEELEFYIRTKKEENILMSIEQLLNGATKDFDNFINHNLNLDWAQHKNEVMKNFGILIQDKKTVDHKKSISSLDPKLPSWGNKGNNILNSNESRLNVNENNILREKFENYARIVFQFNNSRQANGNFDIANEFISILSSANGTRNAQLLESWKILESMKSKDINIVEVGKQYLEQQFLQYTDNLYKKNMNEGLATNVNKIKSFIDTKLKKADKSWKISNLTVINGVPIWALIFYLLRAGLIKEALQVLVENKANIKKVEQSFLTYFKAYASSKDHGLPVEYSTKLHTEYNQHIKSSLDGDPYRLAVYKLIGRCDLSRKNIPAVTLSIEDWLWMHLMLIKEKDAENDPVYERYSLEDFQNIIISYGPSRFSNYYLQTLLLSGLYGLAIDYTYTFSEMDAVHLAIGLASLKLFKIDSSTRLTKKPKRDIRFANILANYTKSFRYSDPRVAVEYLVLITLNEGPTDVELCHEALRELVLETKEFTVLLGKIGRDGARIPGVIEERQPLLHVRDEKEFLHTITEQAARRADEDGRIYDSILLYQLAEEYDIVITLVNSLLSDTLSASDLDQPLVGPDDNSETNPVLLARRMASIYFDNAGISRQIHVKNKEICMLLLNISSIRELYFNKQWQETLSQMELLDLLPFSDELSARKKAQDFSNLDDNIVKNIPNLLIITLSCISNMIHILNESKYQSSTKGQQIDSLKNVARQCMIYAGMIQYRMPRETYSTLINIDVSL.

A leucine zipper-like heptad repeat, required for interaction with NSP1 region spans residues 25–60 (LLESSDNLPSASSELGSIQVSINELRRRVFQLRSKN).

Belongs to the nucleoporin interacting component (NIC) family. In terms of assembly, component of the nuclear pore complex (NPC). NPC constitutes the exclusive means of nucleocytoplasmic transport. NPCs allow the passive diffusion of ions and small molecules and the active, nuclear transport receptor-mediated bidirectional transport of macromolecules such as proteins, RNAs, ribonucleoparticles (RNPs), and ribosomal subunits across the nuclear envelope. Due to its 8-fold rotational symmetry, all subunits are present with 8 copies or multiples thereof. NIC96 is part of three NPC subcomplexes, interacting with NSP1 of the NUP57 subcomplex (NIC96, NSP1, NUP49, NUP57), with NUP120 of the NUP84 subcomplex (SEH1, NUP85, NUP120, NUP145C, SEC13, NUP84, NUP133), and with NUP53 of the NUP53-NUP59-NUP170 subcomplex. The interaction with NUP53 is cell cycle dependent. NIC96 is also associated with the distal ring of the nuclear basket and interacts here with MLP2, which forms together with MLP1 nuclear pore-attached intranuclear filaments.

It localises to the nucleus. It is found in the nuclear pore complex. The protein resides in the nucleus membrane. Its function is as follows. Functions as a component of the nuclear pore complex (NPC). NPC components, collectively referred to as nucleoporins (NUPs), can play the role of both NPC structural components and of docking or interaction partners for transiently associated nuclear transport factors. NIC96, which is localized to the core of the NPC and the distal ring of the nuclear basket, is required for de novo assembly of NPCs. It is involved in nuclear GSP1 import. This is Nucleoporin NIC96 (NIC96) from Saccharomyces cerevisiae (strain ATCC 204508 / S288c) (Baker's yeast).